An 83-amino-acid chain; its full sequence is RNA-binding protein Hfq (83 aa).

A Sm domain is found at 10–69 (DPFLNALRREHVPVSIYLVNGIKLQGQIESFDQYVVLLRNTVTQMVYKHAISTIVPGRAV).

The protein belongs to the Hfq family. As to quaternary structure, homohexamer.

In terms of biological role, RNA chaperone that binds small regulatory RNA (sRNAs) and mRNAs to facilitate mRNA translational regulation in response to envelope stress, environmental stress and changes in metabolite concentrations. Also binds with high specificity to tRNAs. The chain is RNA-binding protein Hfq from Acidovorax ebreus (strain TPSY) (Diaphorobacter sp. (strain TPSY)).